A 77-amino-acid chain; its full sequence is Large ribosomal subunit protein bL28 (77 aa).

This sequence belongs to the bacterial ribosomal protein bL28 family.

This Albidiferax ferrireducens (strain ATCC BAA-621 / DSM 15236 / T118) (Rhodoferax ferrireducens) protein is Large ribosomal subunit protein bL28.